The sequence spans 172 residues: VQ motif-containing protein 17 (172 aa).

A VQ motif is present at residues 51 to 60 (FREIVQNLTG). The disordered stretch occupies residues 60-97 (GKQDHHHHDLPHQKGLKRNPRSRRSHDHHEVHDMNKSH). Residues 61–71 (KQDHHHHDLPH) are compositionally biased toward basic and acidic residues. A compositionally biased stretch (basic residues) spans 72–85 (QKGLKRNPRSRRSH). Over residues 86-95 (DHHEVHDMNK) the composition is skewed to basic and acidic residues.

It is found in the nucleus. Functionally, may function as positive regulator of plant growth. This is VQ motif-containing protein 17 from Arabidopsis thaliana (Mouse-ear cress).